Here is a 205-residue protein sequence, read N- to C-terminus: Small ribosomal subunit protein uS4 (205 aa).

Over residues 1-16 (MSKRESSKYKIDRRMG) the composition is skewed to basic and acidic residues. Residues 1–46 (MSKRESSKYKIDRRMGENIWGRPKSPVNRREYGPGQHGQRRKSKLS) form a disordered region. The S4 RNA-binding domain maps to 94-157 (SRLDAIVYRA…KQLVSVLESV (64 aa)).

It belongs to the universal ribosomal protein uS4 family. In terms of assembly, part of the 30S ribosomal subunit. Contacts protein S5. The interaction surface between S4 and S5 is involved in control of translational fidelity.

Functionally, one of the primary rRNA binding proteins, it binds directly to 16S rRNA where it nucleates assembly of the body of the 30S subunit. Its function is as follows. With S5 and S12 plays an important role in translational accuracy. In Sinorhizobium fredii (strain NBRC 101917 / NGR234), this protein is Small ribosomal subunit protein uS4.